Reading from the N-terminus, the 312-residue chain is Phospholipid phosphatase 3 (312 aa).

The Cytoplasmic segment spans residues 1–33 (MQSYKYDKAIVPESKNGGSPALNNNPRKGGSKR). S19 carries the phosphoserine modification. Residues 34 to 54 (VLLICLDLFCLFMAALPFLII) form a helical membrane-spanning segment. The Extracellular segment spans residues 55–85 (ETSTIKPYRRGFYCNDESIKYPLKVSETIND). A helical transmembrane segment spans residues 86–106 (AVLCAVGIVIAILRIITGEFY). The Cytoplasmic portion of the chain corresponds to 107–123 (RIYYLKEKSRSTIQNPY). The Dityrosine basolateral targeting motif signature appears at 109-110 (YY). The helical transmembrane segment at 124–144 (VAALYKQVGCFLFGCAISQSF) threads the bilayer. At 145–194 (TDIAKVSIGRLRPHFLSVCDPDFSQINCSEGYIQNYRCRGEDSKVQEARK) the chain is on the extracellular side. A phosphatase sequence motif I region spans residues 149 to 157 (KVSIGRLRP). N171 carries N-linked (GlcNAc...) asparagine glycosylation. Residues 183-185 (RGE) carry the Integrin-binding motif motif. Residues 195-215 (SFFSGHASFSMFTMLYLVLYL) form a helical membrane-spanning segment. Residues 197-200 (FSGH) form a phosphatase sequence motif II region. H200 acts as the Proton donors in catalysis. Residues 216–226 (QARFTWRGARL) lie on the Cytoplasmic side of the membrane. The helical transmembrane segment at 227–244 (LRPLLQFTLLMMAFYTGL) threads the bilayer. The segment at 245 to 256 (SRVSDYKHHPSD) is phosphatase sequence motif III. Over 245–258 (SRVSDYKHHPSDVL) the chain is Extracellular. Residue H252 is the Nucleophile of the active site. The helical transmembrane segment at 259-279 (AGFAQGALVACCIVFFVSDLF) threads the bilayer. The interval 276-312 (SDLFKTKTTLSLPAPAIRREILSPVDIMDRSNHHNMV) is mediates interaction with CTNND1. Residues 280–312 (KTKTTLSLPAPAIRREILSPVDIMDRSNHHNMV) lie on the Cytoplasmic side of the membrane.

The protein belongs to the PA-phosphatase related phosphoesterase family. Forms functional homodimers and homooligomers that are not required for substrate recognition and catalytic activity. Can also form heterooligomers with other PLPP2 and PLPP3. Interacts with CTNND1; negatively regulates the PLPP3-mediated stabilization of beta-catenin/CTNNB1. Post-translationally, N-glycosylated. Contains high-mannose oligosaccharides. In terms of tissue distribution, detected in epithelial cells of intestinal mucosa, lung, liver and brain.

It localises to the cell membrane. It is found in the basolateral cell membrane. Its subcellular location is the endoplasmic reticulum membrane. The protein localises to the endoplasmic reticulum-Golgi intermediate compartment membrane. The protein resides in the golgi apparatus membrane. It localises to the golgi apparatus. It is found in the trans-Golgi network membrane. Its subcellular location is the membrane raft. The catalysed reaction is a 1,2-diacyl-sn-glycero-3-phosphate + H2O = a 1,2-diacyl-sn-glycerol + phosphate. It catalyses the reaction 1,2-dihexadecanoyl-sn-glycero-3-phosphate + H2O = 1,2-dihexadecanoyl-sn-glycerol + phosphate. It carries out the reaction 1,2-di-(9Z-octadecenoyl)-sn-glycero-3-phosphate + H2O = 1,2-di-(9Z-octadecenoyl)-sn-glycerol + phosphate. The enzyme catalyses a monoacyl-sn-glycero-3-phosphate + H2O = a monoacylglycerol + phosphate. The catalysed reaction is (9Z)-octadecenoyl-sn-glycero-3-phosphate + H2O = (9Z-octadecenoyl)-glycerol + phosphate. It catalyses the reaction sphing-4-enine 1-phosphate + H2O = sphing-4-enine + phosphate. It carries out the reaction an N-acylsphing-4-enine 1-phosphate + H2O = an N-acylsphing-4-enine + phosphate. The enzyme catalyses N-(octanoyl)-sphing-4-enine-1-phosphate + H2O = N-octanoylsphing-4-enine + phosphate. The catalysed reaction is N-(9Z-octadecenoyl)-ethanolamine phosphate + H2O = N-(9Z-octadecenoyl) ethanolamine + phosphate. It functions in the pathway lipid metabolism; phospholipid metabolism. Its activity is regulated as follows. Magnesium-independent phospholipid phosphatase. Insensitive to N-ethylmaleimide. Inhibited by sphingosine, zinc ions and modestly by propanolol. In terms of biological role, magnesium-independent phospholipid phosphatase of the plasma membrane that catalyzes the dephosphorylation of a variety of glycerolipid and sphingolipid phosphate esters including phosphatidate/PA, lysophosphatidate/LPA, diacylglycerol pyrophosphate/DGPP, sphingosine 1-phosphate/S1P and ceramide 1-phosphate/C1P. Also acts on N-oleoyl ethanolamine phosphate/N-(9Z-octadecenoyl)-ethanolamine phosphate, a potential physiological compound. Has both an extracellular and an intracellular phosphatase activity, allowing the hydrolysis and the cellular uptake of these bioactive lipid mediators from the milieu, regulating signal transduction in different cellular processes. Through the dephosphorylation of extracellular sphingosine-1-phosphate and the regulation of its extra- and intracellular availability, plays a role in vascular homeostasis, regulating endothelial cell migration, adhesion, survival, proliferation and the production of pro-inflammatory cytokines. By maintaining the appropriate levels of this lipid in the cerebellum, also ensure its proper development and function. Through its intracellular lipid phosphatase activity may act in early compartments of the secretory pathway, regulating the formation of Golgi to endoplasmic reticulum retrograde transport carriers. Independently of this phosphatase activity may also function in the Wnt signaling pathway and the stabilization of beta-catenin/CTNNB1, thereby regulating cell proliferation, migration and differentiation in angiogenesis or yet in tumor growth. Also plays a role in integrin-mediated cell-cell adhesion in angiogenesis. The chain is Phospholipid phosphatase 3 from Rattus norvegicus (Rat).